The following is a 337-amino-acid chain: Eukaryotic translation initiation factor 3 subunit H (337 aa).

Positions 25-158 (VQIEGLAVLK…LKALKLSDSF (134 aa)) constitute an MPN domain. Residue Ser-178 is modified to Phosphoserine; by ATPK1. The span at 267–278 (RRTENMARKSAG) shows a compositional bias: basic and acidic residues. Residues 267-290 (RRTENMARKSAGEEPLPEEDPSNP) are disordered.

The protein belongs to the eIF-3 subunit H family. Component of the eukaryotic translation initiation factor 3 (eIF-3) complex. Interacts directly with TIF3A1, TIF3B1, TIF3C1, TIF3E1 and TIF3F1. Associates with the CSN (COP9 signalosome) complex. Binds to CSN1, CSN7 and CSN8. Interacts with ATPK1. In response to auxin (NAA), phosphorylated at Ser-178 by ATPK1 and binds to polysomes via TOR signaling. This phosphorylation is repressed by Torin-1. In terms of tissue distribution, mostly expressed in roots and flowers, and, to a lower extent, in leaves, stems and siliques.

It is found in the cytoplasm. Component of the eukaryotic translation initiation factor 3 (eIF-3) complex, which is involved in protein synthesis of a specialized repertoire of mRNAs and, together with other initiation factors, stimulates binding of mRNA and methionyl-tRNAi to the 40S ribosome. The eIF-3 complex specifically targets and initiates translation of a subset of mRNAs involved in cell proliferation (Potential). Regulates translation initiation of specific 5' mRNAs harboring multiple upstream open reading frames (uORFs) in their 5' leader sequence (e.g. BETA-OHASE 2 and LHY). This Arabidopsis thaliana (Mouse-ear cress) protein is Eukaryotic translation initiation factor 3 subunit H (TIF3H1).